Reading from the N-terminus, the 104-residue chain is NADH-quinone oxidoreductase subunit K (104 aa).

3 helical membrane passes run 4-24 (VPAS…LFGA), 31-51 (VIVL…LVAF), and 67-87 (LFTM…LIAL).

The protein belongs to the complex I subunit 4L family. NDH-1 is composed of 14 different subunits. Subunits NuoA, H, J, K, L, M, N constitute the membrane sector of the complex.

The protein resides in the cell membrane. The enzyme catalyses a quinone + NADH + 5 H(+)(in) = a quinol + NAD(+) + 4 H(+)(out). Its function is as follows. NDH-1 shuttles electrons from NADH, via FMN and iron-sulfur (Fe-S) centers, to quinones in the respiratory chain. The immediate electron acceptor for the enzyme in this species is believed to be a menaquinone. Couples the redox reaction to proton translocation (for every two electrons transferred, four hydrogen ions are translocated across the cytoplasmic membrane), and thus conserves the redox energy in a proton gradient. The polypeptide is NADH-quinone oxidoreductase subunit K (Bacillus mycoides (strain KBAB4) (Bacillus weihenstephanensis)).